The sequence spans 94 residues: METVLVLCSLLAPVVLASAAEKEKEKDPFYYDYQTLRIGGLVFAVVLFSVGILLILSRRCKCSFNQKPRAPGDEEAQVENLITTNAAEPQKAEN.

Residues 1–17 (METVLVLCSLLAPVVLA) form the signal peptide. Topologically, residues 18–34 (SAAEKEKEKDPFYYDYQ) are extracellular. Residues 35–57 (TLRIGGLVFAVVLFSVGILLILS) traverse the membrane as a helical segment. The Cytoplasmic portion of the chain corresponds to 58 to 94 (RRCKCSFNQKPRAPGDEEAQVENLITTNAAEPQKAEN).

This sequence belongs to the FXYD family. In terms of assembly, regulatory subunit of the sodium/potassium-transporting ATPase which is composed of a catalytic alpha subunit, a non-catalytic beta subunit and an additional regulatory subunit. The regulatory subunit, a member of the FXYD protein family, modulates the enzymatic activity in a tissue- and isoform-specific way by changing affinities of the Na+/K+-ATPase toward Na(+), K(+) or ATP.

It localises to the cell membrane. Functionally, associates with and regulates the activity of the sodium/potassium-transporting ATPase (NKA) which catalyzes the hydrolysis of ATP coupled with the exchange of Na(+) and K(+) ions across the plasma membrane. Reduces the apparent affinity for intracellular Na(+) with no change in the apparent affinity for extracellular K(+). In addition to modulating NKA kinetics, may also function as a regulator of NKA localization to the plasma membrane. This is FXYD domain-containing ion transport regulator 6 (Fxyd6) from Mus musculus (Mouse).